A 137-amino-acid chain; its full sequence is MPTINQLVRKPRKSKVEKSKSPALNVGYNSRKKVQTNVSSPQKRGVATRVGTMTPKKPNSALRKFARVRLSNLIEVTAYIPGIGHNLQEHSVVLLRGGRVKDLPGVRYHIVRGALDTAGVNDRKQGRSKYGTKRPKG.

Residues 1 to 57 are disordered; sequence MPTINQLVRKPRKSKVEKSKSPALNVGYNSRKKVQTNVSSPQKRGVATRVGTMTPKK. Asp-102 is subject to 3-methylthioaspartic acid.

Belongs to the universal ribosomal protein uS12 family. In terms of assembly, part of the 30S ribosomal subunit. Contacts proteins S8 and S17. May interact with IF1 in the 30S initiation complex.

Functionally, with S4 and S5 plays an important role in translational accuracy. Its function is as follows. Interacts with and stabilizes bases of the 16S rRNA that are involved in tRNA selection in the A site and with the mRNA backbone. Located at the interface of the 30S and 50S subunits, it traverses the body of the 30S subunit contacting proteins on the other side and probably holding the rRNA structure together. The combined cluster of proteins S8, S12 and S17 appears to hold together the shoulder and platform of the 30S subunit. This is Small ribosomal subunit protein uS12 from Streptococcus suis (strain 98HAH33).